The sequence spans 104 residues: MTDSIAATINTRANVYFDGKCVSHGITLADGTKKSVGVILPATLTFNTGAPEVMETVAGSCSIKLAGSDSWQSYGPGERFDVPGQSSFEIKVEGEPYHYICHFG.

This sequence belongs to the nucleoside phosphorylase PpnP family.

The catalysed reaction is a purine D-ribonucleoside + phosphate = a purine nucleobase + alpha-D-ribose 1-phosphate. It catalyses the reaction adenosine + phosphate = alpha-D-ribose 1-phosphate + adenine. It carries out the reaction cytidine + phosphate = cytosine + alpha-D-ribose 1-phosphate. The enzyme catalyses guanosine + phosphate = alpha-D-ribose 1-phosphate + guanine. The catalysed reaction is inosine + phosphate = alpha-D-ribose 1-phosphate + hypoxanthine. It catalyses the reaction thymidine + phosphate = 2-deoxy-alpha-D-ribose 1-phosphate + thymine. It carries out the reaction uridine + phosphate = alpha-D-ribose 1-phosphate + uracil. The enzyme catalyses xanthosine + phosphate = alpha-D-ribose 1-phosphate + xanthine. Functionally, catalyzes the phosphorolysis of diverse nucleosides, yielding D-ribose 1-phosphate and the respective free bases. Can use uridine, adenosine, guanosine, cytidine, thymidine, inosine and xanthosine as substrates. Also catalyzes the reverse reactions. This chain is Pyrimidine/purine nucleoside phosphorylase, found in Leptothrix cholodnii (strain ATCC 51168 / LMG 8142 / SP-6) (Leptothrix discophora (strain SP-6)).